A 360-amino-acid chain; its full sequence is Phenylalanine--tRNA ligase alpha subunit (360 aa).

Mg(2+) is bound at residue Glu260.

This sequence belongs to the class-II aminoacyl-tRNA synthetase family. Phe-tRNA synthetase alpha subunit type 1 subfamily. Tetramer of two alpha and two beta subunits. Mg(2+) is required as a cofactor.

The protein localises to the cytoplasm. The enzyme catalyses tRNA(Phe) + L-phenylalanine + ATP = L-phenylalanyl-tRNA(Phe) + AMP + diphosphate + H(+). The polypeptide is Phenylalanine--tRNA ligase alpha subunit (Rhizobium etli (strain CIAT 652)).